A 160-amino-acid polypeptide reads, in one-letter code: Ureidoglycolate lyase (160 aa).

Belongs to the ureidoglycolate lyase family. As to quaternary structure, homodimer. It depends on Ni(2+) as a cofactor.

It carries out the reaction (S)-ureidoglycolate = urea + glyoxylate. It functions in the pathway nitrogen metabolism; (S)-allantoin degradation. In terms of biological role, catalyzes the catabolism of the allantoin degradation intermediate (S)-ureidoglycolate, generating urea and glyoxylate. Involved in the anaerobic utilization of allantoin as sole nitrogen source. Reinforces the induction of genes involved in the degradation of allantoin and glyoxylate by producing glyoxylate. This chain is Ureidoglycolate lyase, found in Escherichia coli O127:H6 (strain E2348/69 / EPEC).